The following is a 1280-amino-acid chain: Fibronectin type III domain-containing protein (1280 aa).

Positions 1–19 are cleaved as a signal peptide; it reads MWQILLAISIFSLSKLSNA. Over 20 to 1156 the chain is Extracellular; sequence QQQPKVAPPQ…RVSTPIYQSA (1137 aa). 5 disulfides stabilise this stretch: C58-C111, C268-C321, C369-C417, C460-C511, and C553-C604. 5 Fibronectin type-III domains span residues 628–722, 730–824, 830–933, 939–1033, and 1039–1131; these read PFPP…TGSF, PEKW…VKQF, PTGK…VAAD, PGPP…TEKT, and PAKP…PASD. Residues 1118-1130 show a composition bias toward polar residues; sequence YPSQENPQESPAS. Positions 1118–1144 are disordered; that stretch reads YPSQENPQESPASDITEARPRPGISNV. The helical transmembrane segment at 1157–1177 threads the bilayer; the sequence is WFIALLVLIALLLLVLLTFVL. Residues 1178-1280 are Cytoplasmic-facing; sequence YTRHQGAKYL…KDPSSLATFV (103 aa). Residues 1206 to 1280 form a disordered region; sequence DEEEGSFSNN…KDPSSLATFV (75 aa). Over residues 1262–1273 the composition is skewed to basic and acidic residues; the sequence is DEKKAPPEEKDP.

As to expression, component of the acid-insoluble organic matrix of the aragonitic skeleton (at protein level).

It is found in the membrane. In Acropora millepora (Staghorn coral), this protein is Fibronectin type III domain-containing protein.